We begin with the raw amino-acid sequence, 293 residues long: uncharacterized protein (293 aa).

An HTH lysR-type domain is found at 1 to 58 (MDLRRFITLKTVVEEGSFLRASQKLCCTQSTVTFHIQQLEQEFSVQLFEKIGRRMCLT). The H-T-H motif DNA-binding region spans 18–37 (FLRASQKLCCTQSTVTFHIQ).

This sequence belongs to the LysR transcriptional regulatory family.

This is an uncharacterized protein from Escherichia coli (strain K12).